A 219-amino-acid chain; its full sequence is Octanoyltransferase (219 aa).

The region spanning Glu-32 to Lys-207 is the BPL/LPL catalytic domain. Residues Arg-71–His-78, Ser-138–Gly-140, and Gly-151–Ala-153 each bind substrate. Cys-169 (acyl-thioester intermediate) is an active-site residue.

It belongs to the LipB family.

Its subcellular location is the cytoplasm. The enzyme catalyses octanoyl-[ACP] + L-lysyl-[protein] = N(6)-octanoyl-L-lysyl-[protein] + holo-[ACP] + H(+). It participates in protein modification; protein lipoylation via endogenous pathway; protein N(6)-(lipoyl)lysine from octanoyl-[acyl-carrier-protein]: step 1/2. Catalyzes the transfer of endogenously produced octanoic acid from octanoyl-acyl-carrier-protein onto the lipoyl domains of lipoate-dependent enzymes. Lipoyl-ACP can also act as a substrate although octanoyl-ACP is likely to be the physiological substrate. The protein is Octanoyltransferase of Shewanella pealeana (strain ATCC 700345 / ANG-SQ1).